The primary structure comprises 358 residues: Protein phosphatase 1 regulatory subunit 3G (358 aa).

Residues 1–71 form a disordered region; the sequence is MEPIGARLSL…KEEAAPQEQE (71 aa). Over residues 11–29 the composition is skewed to low complexity; sequence EAPGPAPFREAPPAEELPA. S86 is modified (phosphoserine). One can recognise a CBM21 domain in the interval 210-350; that stretch reads AERLQRQRVC…NNAGANYTLR (141 aa). The segment covering 270–280 has biased composition (low complexity); that stretch reads EPLEPQQPEAP. A disordered region spans residues 270–295; sequence EPLEPQQPEAPSGASEPGSGDAKKEP.

Functionally, glycogen-targeting subunit for protein phosphatase 1 (PP1). Involved in the regulation of hepatic glycogenesis in a manner coupled to the fasting-feeding cycle and distinct from other glycogen-targeting subunits. This is Protein phosphatase 1 regulatory subunit 3G (PPP1R3G) from Homo sapiens (Human).